Here is a 383-residue protein sequence, read N- to C-terminus: RNA-binding motif, single-stranded-interacting protein 2 (383 aa).

Met-1 carries the post-translational modification N-acetylmethionine. Positions 28–56 (QMAPPSPRNSTPNSSGGGGGGSGGNDQLS) are disordered. The segment covering 42 to 51 (SGGGGGGSGG) has biased composition (gly residues). 2 RRM domains span residues 58–131 (TNLY…MAKQ) and 137–222 (TNLY…FADG). A Phosphoserine modification is found at Ser-108. Ser-287 bears the Phosphoserine mark. Residues 352–383 (SSVSAEESNGQQNQLAVEPPSDHGVYPFQFSK) are disordered.

The protein resides in the nucleus. In Mus musculus (Mouse), this protein is RNA-binding motif, single-stranded-interacting protein 2 (Rbms2).